The following is a 322-amino-acid chain: Outer membrane protein assembly factor BamC (322 aa).

The first 22 residues, 1–22 (MISLLAVAVLAGCSNPETRSQA), serve as a signal peptide directing secretion.

Belongs to the BamC family. As to quaternary structure, part of the Bam complex.

The protein localises to the cell outer membrane. Part of the outer membrane protein assembly complex, which is involved in assembly and insertion of beta-barrel proteins into the outer membrane. This is Outer membrane protein assembly factor BamC from Oceanimonas sp. (strain GK1 / IBRC-M 10197).